Reading from the N-terminus, the 839-residue chain is Probable beta-glucosidase I (839 aa).

An N-linked (GlcNAc...) asparagine glycan is attached at Asn-197. The active site involves Asp-225. The 161-residue stretch at 395–555 (DGKTGFSFKV…GQEELISNAV (161 aa)) folds into the PA14 domain. N-linked (GlcNAc...) asparagine glycosylation is present at Asn-620.

Belongs to the glycosyl hydrolase 3 family.

It localises to the secreted. It carries out the reaction Hydrolysis of terminal, non-reducing beta-D-glucosyl residues with release of beta-D-glucose.. The protein operates within glycan metabolism; cellulose degradation. Beta-glucosidases are one of a number of cellulolytic enzymes involved in the degradation of cellulosic biomass. Catalyzes the last step releasing glucose from the inhibitory cellobiose. The polypeptide is Probable beta-glucosidase I (bglI) (Aspergillus oryzae (strain ATCC 42149 / RIB 40) (Yellow koji mold)).